Reading from the N-terminus, the 1821-residue chain is PH-interacting protein (1821 aa).

Ser-136 bears the Phosphoserine mark. 5 WD repeats span residues 181–222 (GHLS…ATLR), 224–262 (HAAE…PLAV), 265–310 (GHSA…INPR), 319–360 (RPGV…KISE), and 363–402 (FHTD…WKSI). Lys-421 participates in a covalent cross-link: Glycyl lysine isopeptide (Lys-Gly) (interchain with G-Cter in SUMO2). 3 WD repeats span residues 422 to 461 (ITKM…LIHV), 464 to 504 (GHED…KVRS), and 512 to 551 (QGHG…KYDK). 6 positions are modified to phosphoserine: Ser-641, Ser-659, Ser-674, Ser-677, Ser-683, and Ser-692. Disordered regions lie at residues 653-695 (EQDL…SGQI) and 782-927 (DLGD…RLAV). Residues 665-681 (SNASRVNRGSVSSTSEV) show a composition bias toward polar residues. The span at 800 to 810 (SALEETPRPLE) shows a compositional bias: basic and acidic residues. Residues 841–854 (SDGSSSDYSSDYSD) show a composition bias toward low complexity. Residues Ser-879, Ser-880, Ser-881, and Ser-911 each carry the phosphoserine modification. The span at 912–924 (PKKKKPKERKQKR) shows a compositional bias: basic residues. Residues 924 to 1129 (RLAVGELTEN…MELIPNNAVF (206 aa)) are mediates interaction with IRS1. In terms of domain architecture, Bromo 1 spans 1156 to 1263 (WGANPRDEEC…DLLLHFIKDQ (108 aa)). 3 positions are modified to phosphoserine: Ser-1281, Ser-1283, and Ser-1296. Positions 1282–1310 (DSEEEEKDADVPGTSTRKRKDHQPRRRLR) are disordered. A compositionally biased stretch (basic residues) spans 1297–1310 (TRKRKDHQPRRRLR). Ser-1315 is subject to Phosphoserine. The 106-residue stretch at 1316 to 1421 (YDIQAWKKQC…AFFEEHISSV (106 aa)) folds into the Bromo 2 domain. Thr-1359 is subject to Phosphothreonine. Position 1405 is a phosphoserine (Ser-1405). Over residues 1435–1446 (NTISKKRKKRNR) the composition is skewed to basic residues. The segment at 1435–1507 (NTISKKRKKR…PESSSVVRTR (73 aa)) is disordered. Over residues 1447–1457 (SSSLSSSAASS) the composition is skewed to low complexity. Lys-1470 participates in a covalent cross-link: Glycyl lysine isopeptide (Lys-Gly) (interchain with G-Cter in SUMO1); alternate. Lys-1470 is covalently cross-linked (Glycyl lysine isopeptide (Lys-Gly) (interchain with G-Cter in SUMO2); alternate). Over residues 1471–1482 (SEVSTSPFSIPT) the composition is skewed to polar residues. The residue at position 1479 (Ser-1479) is a Phosphoserine. Lys-1497 is modified (N6-acetyllysine). A Phosphoserine modification is found at Ser-1525. Lys-1533 is modified (N6-acetyllysine). The span at 1556–1576 (STLSSPDPLTFSHATKNNSAK) shows a compositional bias: polar residues. Disordered regions lie at residues 1556-1596 (STLS…VFSK), 1623-1676 (QVNG…NSEQ), and 1740-1785 (RSNR…DSEE). A Phosphoserine modification is found at Ser-1560. Lys-1644 is covalently cross-linked (Glycyl lysine isopeptide (Lys-Gly) (interchain with G-Cter in SUMO2)). Ser-1651 carries the phosphoserine modification. Lys-1670 participates in a covalent cross-link: Glycyl lysine isopeptide (Lys-Gly) (interchain with G-Cter in SUMO2). Residues Ser-1762 and Ser-1783 each carry the phosphoserine modification.

As to quaternary structure, interacts (via bromo domain) with acetylated lysine residues on histone H1.4, histone H3 and H4 (in vitro). Interacts with IRS1 and IRS2. Widely expressed with most abundant expression detected in pancreatic islets, brain and skeletal muscle. Predominantly expressed in developing and regenerating neurons. Expressed in adult brain (granular layer of the olfactorium bulb, hippocampus, dentate gyrus and cerebellum internal granular layer). Expressed in the CA3 region of adult hippocampus, adult and fetal retina, perinatal dorsal root ganglion and embryonal olfactory epithelia (at protein level).

It is found in the nucleus. Its function is as follows. Probable regulator of the insulin and insulin-like growth factor signaling pathways. Stimulates cell proliferation through regulation of cyclin transcription and has an anti-apoptotic activity through AKT1 phosphorylation and activation. Plays a role in the regulation of cell morphology and cytoskeletal organization. This chain is PH-interacting protein (Phip), found in Mus musculus (Mouse).